A 184-amino-acid chain; its full sequence is ATP synthase subunit b, chloroplastic (184 aa).

Residues 27 to 49 traverse the membrane as a helical segment; that stretch reads LATNPINLSVVLGVLIFFGKGVL.

Belongs to the ATPase B chain family. F-type ATPases have 2 components, F(1) - the catalytic core - and F(0) - the membrane proton channel. F(1) has five subunits: alpha(3), beta(3), gamma(1), delta(1), epsilon(1). F(0) has four main subunits: a(1), b(1), b'(1) and c(10-14). The alpha and beta chains form an alternating ring which encloses part of the gamma chain. F(1) is attached to F(0) by a central stalk formed by the gamma and epsilon chains, while a peripheral stalk is formed by the delta, b and b' chains.

The protein resides in the plastid. Its subcellular location is the chloroplast thylakoid membrane. Its function is as follows. F(1)F(0) ATP synthase produces ATP from ADP in the presence of a proton or sodium gradient. F-type ATPases consist of two structural domains, F(1) containing the extramembraneous catalytic core and F(0) containing the membrane proton channel, linked together by a central stalk and a peripheral stalk. During catalysis, ATP synthesis in the catalytic domain of F(1) is coupled via a rotary mechanism of the central stalk subunits to proton translocation. Component of the F(0) channel, it forms part of the peripheral stalk, linking F(1) to F(0). This chain is ATP synthase subunit b, chloroplastic, found in Nicotiana sylvestris (Wood tobacco).